The sequence spans 258 residues: UPF0246 protein YaaA (258 aa).

This sequence belongs to the UPF0246 family.

The chain is UPF0246 protein YaaA from Escherichia coli O127:H6 (strain E2348/69 / EPEC).